The chain runs to 777 residues: Phosphoribosylformylglycinamidine synthase subunit PurL (777 aa).

Histidine 50 is an active-site residue. ATP is bound by residues tyrosine 53 and lysine 92. Glutamate 94 contributes to the Mg(2+) binding site. Residues serine 95 to histidine 98 and arginine 117 contribute to the substrate site. Histidine 96 (proton acceptor) is an active-site residue. Residue aspartate 118 coordinates Mg(2+). Glutamine 241 is a substrate binding site. A Mg(2+)-binding site is contributed by aspartate 269. Substrate is bound at residue glutamate 313–glutamine 315. Residues aspartate 520 and glycine 557 each coordinate ATP. Mg(2+) is bound at residue asparagine 558. Substrate is bound at residue serine 560.

This sequence belongs to the FGAMS family. As to quaternary structure, monomer. Part of the FGAM synthase complex composed of 1 PurL, 1 PurQ and 2 PurS subunits.

The protein resides in the cytoplasm. The enzyme catalyses N(2)-formyl-N(1)-(5-phospho-beta-D-ribosyl)glycinamide + L-glutamine + ATP + H2O = 2-formamido-N(1)-(5-O-phospho-beta-D-ribosyl)acetamidine + L-glutamate + ADP + phosphate + H(+). It participates in purine metabolism; IMP biosynthesis via de novo pathway; 5-amino-1-(5-phospho-D-ribosyl)imidazole from N(2)-formyl-N(1)-(5-phospho-D-ribosyl)glycinamide: step 1/2. Part of the phosphoribosylformylglycinamidine synthase complex involved in the purines biosynthetic pathway. Catalyzes the ATP-dependent conversion of formylglycinamide ribonucleotide (FGAR) and glutamine to yield formylglycinamidine ribonucleotide (FGAM) and glutamate. The FGAM synthase complex is composed of three subunits. PurQ produces an ammonia molecule by converting glutamine to glutamate. PurL transfers the ammonia molecule to FGAR to form FGAM in an ATP-dependent manner. PurS interacts with PurQ and PurL and is thought to assist in the transfer of the ammonia molecule from PurQ to PurL. This is Phosphoribosylformylglycinamidine synthase subunit PurL from Trichormus variabilis (strain ATCC 29413 / PCC 7937) (Anabaena variabilis).